We begin with the raw amino-acid sequence, 360 residues long: Teichoic acids export ATP-binding protein TagH (360 aa).

Positions 24-245 (LKAMFFPKTR…YEDYINWFNK (222 aa)) constitute an ABC transporter domain. 59 to 66 (GINGSGKS) is a binding site for ATP. Positions 246–360 (LSKEEKEAHK…GDIDNSDVSL (115 aa)) are unknown. Positions 270–290 (EEQENGKAGSGGDGTQPIVQP) are disordered.

It belongs to the ABC transporter superfamily. Teichoic acids exporter (TC 3.A.1.104.1) family. The complex is composed of two ATP-binding proteins (TagH) and two transmembrane proteins (TagG).

The protein localises to the cell membrane. It catalyses the reaction ATP + H2O + teichoic acidSide 1 = ADP + phosphate + teichoic acidSide 2.. Its function is as follows. Part of the ABC transporter complex TagGH involved in teichoic acids export. Responsible for energy coupling to the transport system. In Shouchella clausii (strain KSM-K16) (Alkalihalobacillus clausii), this protein is Teichoic acids export ATP-binding protein TagH.